The sequence spans 330 residues: MATH domain and coiled-coil domain-containing protein At3g58210 (330 aa).

The 128-residue stretch at 6-133 folds into the MATH domain; sequence DNKFTWVIQN…NDELKIVAEV (128 aa). A coiled-coil region spans residues 263–314; that stretch reads FKVDWLEKKLEEVKKKKEEEQTGEARIQELEEELKEFKQKCLDREAMLEKEK.

This chain is MATH domain and coiled-coil domain-containing protein At3g58210, found in Arabidopsis thaliana (Mouse-ear cress).